The sequence spans 341 residues: Sphingolipid long chain base-responsive protein LSP1 (341 aa).

Residues 1–11 (MHRTYSLRNQR) are compositionally biased toward polar residues. The interval 1 to 32 (MHRTYSLRNQRAPTAAELQAPPPPPSSTKSKF) is disordered. Thr233 bears the Phosphothreonine mark. Composition is skewed to acidic residues over residues 282-294 (YEDE…EEPE) and 305-323 (VEEE…DEAH). Residues 282-341 (YEDEDGEEEEEPEIQNGDIPGQVVEEEEVEWTTEVPVDDEAHEADHHVSQNGHTSGSENI) form a disordered region. The span at 330–341 (SQNGHTSGSENI) shows a compositional bias: polar residues.

In terms of processing, phosphorylated by PKH1 and PKH2. Phosphorylation is stimulated by sphingolipid long chain bases (LCBs). N-glycosylated.

Its subcellular location is the cytoplasm. It localises to the cell cortex. Functionally, together with PIL1, main component of eisosomes, structures at the cell periphery underneath the plasma membrane that mark the site of endocytosis. Negative regulator of cell wall integrity (CWI) in unstressed cells, probably by inhibiting protein kinase PKH1/PHK2 activity and regulating their downstream CWI pathways PKC1-MAP kinase pathway and protein kinase YPK1 pathway. Activity may be regulated by the transient increase of sphingolipid long chain bases (LCBs) during heat stress. This Saccharomyces cerevisiae (strain ATCC 204508 / S288c) (Baker's yeast) protein is Sphingolipid long chain base-responsive protein LSP1 (LSP1).